Consider the following 231-residue polypeptide: Translin-associated protein X homolog (231 aa).

It belongs to the translin family.

It localises to the cytoplasm. The protein resides in the nucleus. The sequence is that of Translin-associated protein X homolog from Schizosaccharomyces pombe (strain 972 / ATCC 24843) (Fission yeast).